Consider the following 280-residue polypeptide: Small ribosomal subunit protein uS15m (280 aa).

Belongs to the universal ribosomal protein uS15 family. Component of the mitochondrial ribosome small subunit (28S) which comprises a 12S rRNA and about 30 distinct proteins. As to expression, expressed in anterior and posterior midgut primordia in stage 11 embryos. In stage 13 embryos, expression is high in the developing midgut and hindgut. In stage 16 embryos, expression is elevated in the midgut, hindgut, and in a small region that will give rise to pharyngeal muscles and to the stomatogastric nervous system. In larvae, expression is predominant in the gut, and head, presumably in pharyngeal muscles.

The protein resides in the mitochondrion. Its function is as follows. Essential for gut mitochondrial activity. Might be involved in tissue specific growth factor production. This Drosophila melanogaster (Fruit fly) protein is Small ribosomal subunit protein uS15m (bonsai).